We begin with the raw amino-acid sequence, 55 residues long: ATP synthase F(0) complex subunit 8 (55 aa).

A helical membrane pass occupies residues 7–24 (SPWFFIMLTTWLTFSLII).

This sequence belongs to the ATPase protein 8 family. In terms of assembly, component of the ATP synthase complex composed at least of ATP5F1A/subunit alpha, ATP5F1B/subunit beta, ATP5MC1/subunit c (homooctomer), MT-ATP6/subunit a, MT-ATP8/subunit 8, ATP5ME/subunit e, ATP5MF/subunit f, ATP5MG/subunit g, ATP5MK/subunit k, ATP5MJ/subunit j, ATP5F1C/subunit gamma, ATP5F1D/subunit delta, ATP5F1E/subunit epsilon, ATP5PF/subunit F6, ATP5PB/subunit b, ATP5PD/subunit d, ATP5PO/subunit OSCP. ATP synthase complex consists of a soluble F(1) head domain (subunits alpha(3) and beta(3)) - the catalytic core - and a membrane F(0) domain - the membrane proton channel (subunits c, a, 8, e, f, g, k and j). These two domains are linked by a central stalk (subunits gamma, delta, and epsilon) rotating inside the F1 region and a stationary peripheral stalk (subunits F6, b, d, and OSCP).

The protein localises to the mitochondrion membrane. Its function is as follows. Subunit 8, of the mitochondrial membrane ATP synthase complex (F(1)F(0) ATP synthase or Complex V) that produces ATP from ADP in the presence of a proton gradient across the membrane which is generated by electron transport complexes of the respiratory chain. ATP synthase complex consist of a soluble F(1) head domain - the catalytic core - and a membrane F(1) domain - the membrane proton channel. These two domains are linked by a central stalk rotating inside the F(1) region and a stationary peripheral stalk. During catalysis, ATP synthesis in the catalytic domain of F(1) is coupled via a rotary mechanism of the central stalk subunits to proton translocation. In vivo, can only synthesize ATP although its ATP hydrolase activity can be activated artificially in vitro. Part of the complex F(0) domain. This chain is ATP synthase F(0) complex subunit 8, found in Columbina passerina (Common ground-dove).